Consider the following 438-residue polypeptide: UDP-N-acetylmuramoylalanine--D-glutamate ligase (438 aa).

112 to 118 is an ATP binding site; that stretch reads GSNGKST.

Belongs to the MurCDEF family.

It localises to the cytoplasm. The enzyme catalyses UDP-N-acetyl-alpha-D-muramoyl-L-alanine + D-glutamate + ATP = UDP-N-acetyl-alpha-D-muramoyl-L-alanyl-D-glutamate + ADP + phosphate + H(+). Its pathway is cell wall biogenesis; peptidoglycan biosynthesis. Its function is as follows. Cell wall formation. Catalyzes the addition of glutamate to the nucleotide precursor UDP-N-acetylmuramoyl-L-alanine (UMA). In Yersinia pestis bv. Antiqua (strain Antiqua), this protein is UDP-N-acetylmuramoylalanine--D-glutamate ligase.